We begin with the raw amino-acid sequence, 775 residues long: Glycerol-3-phosphate acyltransferase (775 aa).

Residues 268–273 (HRSYID) carry the HXXXXD motif motif.

Belongs to the GPAT/DAPAT family.

The protein resides in the cell membrane. It carries out the reaction sn-glycerol 3-phosphate + an acyl-CoA = a 1-acyl-sn-glycero-3-phosphate + CoA. It participates in phospholipid metabolism; CDP-diacylglycerol biosynthesis; CDP-diacylglycerol from sn-glycerol 3-phosphate: step 1/3. The chain is Glycerol-3-phosphate acyltransferase (plsB) from Mycobacterium leprae (strain TN).